The chain runs to 295 residues: G1/S-specific cyclin-D1 (295 aa).

The Cyclin N-terminal domain occupies 28 to 152; it reads LRAMLKAEET…LLVNKLKWNL (125 aa). The segment at 262 to 295 is disordered; sequence AQQNMDPKAAEEEEEEEEEVDLACTPTDVRDVDI. A Glycyl lysine isopeptide (Lys-Gly) (interchain with G-Cter in ubiquitin) cross-link involves residue Lys-269. Residues 272–282 are compositionally biased toward acidic residues; it reads EEEEEEEEEVD. Phosphothreonine is present on Thr-286.

The protein belongs to the cyclin family. Cyclin D subfamily. Interacts with either CDK4 or CDK6 protein kinase to form a serine/threonine kinase holoenzyme complex. The cyclin subunit imparts substrate specificity to the complex. Component of the ternary complex CCND1/CDK4/CDKN1B required for nuclear translocation and modulation of CDK4-mediated kinase activity. Interacts directly with CDKN1B. Can form similar complexes with either CDKN1A or CDKN2A. Interacts with UHRF2; the interaction ubiquitinates CCND1 and appears to occur independently of phosphorylation. Interacts with USP2. Interacts (via cyclin N-terminal domain) with INSM1 (via N-terminal region); the interaction competes with the binding of CCND1 to CDK4 during cell cycle progression and inhibits CDK4 activity. Interacts with CDK4; the interaction is prevented with the binding of CCND1 to INSM1 during cell cycle progression. In terms of processing, phosphorylation at Thr-286 by MAP kinases is required for ubiquitination and degradation by the DCX(AMBRA1) complex. It also plays an essential role for recognition by the FBXO31 component of SCF (SKP1-cullin-F-box) protein ligase complex following DNA damage. Ubiquitinated at Lys-269 by the DCX(AMBRA1) complex during the transition from G1 to S cell phase, leading to its degradation: ubiquitination is dependent on Thr-286 phosphorylation. The DCX(AMBRA1) complex represents the major regulator of CCND1 stability during the G1/S transition. Also ubiquitinated by the SCF(FBXO4) and Cul7-RING(FBXW8) ubiquitin-protein ligase complexes. Following DNA damage it is ubiquitinated by the SCF(FBXO31) protein ligase complex. SCF(FBXO31) ubiquitination is dependent on Thr-286 phosphorylation. Ubiquitinated also by UHRF2 apparently in a phosphorylation-independent manner. Ubiquitination leads to its degradation and G1 arrest. Deubiquitinated by USP2; leading to its stabilization.

It is found in the nucleus. The protein resides in the cytoplasm. The protein localises to the nucleus membrane. Regulatory component of the cyclin D1-CDK4 (DC) complex that phosphorylates and inhibits members of the retinoblastoma (RB) protein family including RB1 and regulates the cell-cycle during G(1)/S transition. Phosphorylation of RB1 allows dissociation of the transcription factor E2F from the RB/E2F complex and the subsequent transcription of E2F target genes which are responsible for the progression through the G(1) phase. Hypophosphorylates RB1 in early G(1) phase. Cyclin D-CDK4 complexes are major integrators of various mitogenenic and antimitogenic signals. Also a substrate for SMAD3, phosphorylating SMAD3 in a cell-cycle-dependent manner and repressing its transcriptional activity. Component of the ternary complex, cyclin D1/CDK4/CDKN1B, required for nuclear translocation and activity of the cyclin D-CDK4 complex. Exhibits transcriptional corepressor activity with INSM1 on the NEUROD1 and INS promoters in a cell cycle-independent manner. The polypeptide is G1/S-specific cyclin-D1 (CCND1) (Pongo abelii (Sumatran orangutan)).